A 31-amino-acid chain; its full sequence is Nemertide alpha-4 (31 aa).

Cystine bridges form between Cys2/Cys16, Cys9/Cys20, and Cys15/Cys26. 4-hydroxyproline occurs at positions 28 and 29.

It belongs to the nemertide family. As to expression, confined to the epidermis and to the mucus layer.

It is found in the secreted. Its function is as follows. Potent toxin, demonstrating strong inhibitory effects on insect sodium channels (Nav) and reduced activity on mammalian sodium channels. Potently inhibits inactivation of insect sodium channels of B.germanica (BgNav1) (EC(50)=11.1 nM). Also delays the inactivation of most mammalian Nav (human Nav1.1/SCN1A; EC(50)=92 nM, rat Nav1.2/SCN2A; EC(50)=134.2 nM, rat Nav1.3/SCN3A; EC(50)=12.9 nM, rat Nav1.4/SCN4A; EC(50)=14.6 nM, human Nav1.5/SCN5A; EC(50)=27.8 nM, mouse Nav1.6/SCN8A; EC(50)=123.6 nM, human Nav1.9/SCN9A; EC(50)=80.5 nM). Inactivation is completely prevented by a concentration of 1 uM, resulting in sustained, non-inactivating currents. In addition, the toxin significantly enhances the recovery from inactivation, and the open state is not required for the toxin to interact with the channel. In vivo, injection into brine shrimp (Artemia salina) stops movement or causes death after 24 hours (EC(50)=0.4 uM). This Lineus sanguineus (Ribbon worm) protein is Nemertide alpha-4.